A 64-amino-acid polypeptide reads, in one-letter code: Large ribosomal subunit protein bL35 (64 aa).

Positions 1-14 are enriched in basic residues; it reads MKQKTHKGTAKRIK. The disordered stretch occupies residues 1–48; that stretch reads MKQKTHKGTAKRIKVTGSGKLRREQANRRHLLEGKPSKRTRRLKGTED. Positions 21-36 are enriched in basic and acidic residues; the sequence is LRREQANRRHLLEGKP.

It belongs to the bacterial ribosomal protein bL35 family.

This is Large ribosomal subunit protein bL35 from Corynebacterium aurimucosum (strain ATCC 700975 / DSM 44827 / CIP 107346 / CN-1) (Corynebacterium nigricans).